A 331-amino-acid polypeptide reads, in one-letter code: Phosphate acyltransferase (331 aa).

The protein belongs to the PlsX family. In terms of assembly, homodimer. Probably interacts with PlsY.

The protein localises to the cytoplasm. The enzyme catalyses a fatty acyl-[ACP] + phosphate = an acyl phosphate + holo-[ACP]. Its pathway is lipid metabolism; phospholipid metabolism. In terms of biological role, catalyzes the reversible formation of acyl-phosphate (acyl-PO(4)) from acyl-[acyl-carrier-protein] (acyl-ACP). This enzyme utilizes acyl-ACP as fatty acyl donor, but not acyl-CoA. The sequence is that of Phosphate acyltransferase from Ureaplasma urealyticum serovar 10 (strain ATCC 33699 / Western).